A 376-amino-acid polypeptide reads, in one-letter code: UDP-N-acetylglucosamine 2-epimerase (376 aa).

Residues R10, K15, D95, E117, H213, Q271, F276, 290 to 292 (SGG), E296, and R313 each bind substrate.

Belongs to the UDP-N-acetylglucosamine 2-epimerase family. Homodimer.

The protein resides in the cytoplasm. The enzyme catalyses UDP-N-acetyl-alpha-D-glucosamine = UDP-N-acetyl-alpha-D-mannosamine. Its pathway is bacterial outer membrane biogenesis; enterobacterial common antigen biosynthesis. Catalyzes the reversible epimerization at C-2 of UDP-N-acetylglucosamine (UDP-GlcNAc) and thereby provides bacteria with UDP-N-acetylmannosamine (UDP-ManNAc), the activated donor of ManNAc residues. In Yersinia pestis, this protein is UDP-N-acetylglucosamine 2-epimerase.